A 313-amino-acid polypeptide reads, in one-letter code: Ribosomal RNA small subunit methyltransferase H (313 aa).

Residues 35 to 37 (GGH), Asp55, Phe80, Asp102, and Gln109 contribute to the S-adenosyl-L-methionine site.

The protein belongs to the methyltransferase superfamily. RsmH family.

Its subcellular location is the cytoplasm. It carries out the reaction cytidine(1402) in 16S rRNA + S-adenosyl-L-methionine = N(4)-methylcytidine(1402) in 16S rRNA + S-adenosyl-L-homocysteine + H(+). Specifically methylates the N4 position of cytidine in position 1402 (C1402) of 16S rRNA. The chain is Ribosomal RNA small subunit methyltransferase H from Shewanella sp. (strain MR-7).